A 126-amino-acid chain; its full sequence is UPF0325 protein PBPRA2971 (126 aa).

This sequence belongs to the UPF0325 family.

The polypeptide is UPF0325 protein PBPRA2971 (Photobacterium profundum (strain SS9)).